The primary structure comprises 430 residues: MNTNIVILGTQWGDEGKGKIVDFLSSNSSYVVRYHGGHNAGHTLVVNGKKIILHLIPSGLLYPNVIGIISNGVVISPFELVKEIRMLEKNNHFINERLFISESAPLILPYHIAIDLAREKQLGINAIGTTGRGIGPAYEDKVARRALRVGDLKNTQKLSTKLKVIVDYYNHQLVSFYKQNPISYKEILKDLLKVKDLIYNMIKDTSAILHKAIEDKKRIIFEGAQGTLLDIDHGTYPYVTSSNSTTGGIITGTGVGPKNLGYILGITKAYTTRVGKGPFPTELFDDIDSYLSKKGQEFGSTTGRKRRTGWLDGVALRYSVKINSLSALCITKLDVLDDLKEIKICTSYKDVNTKKIYKDFPIFNLEDVTPVYEVHPGWMKKTSGIKKIEDLPKAACNYINRIEEIAQVPIDIISTGPDRSDTILLKSLFF.

GTP contacts are provided by residues 13 to 19 (GDEGKGK) and 41 to 43 (GHT). The active-site Proton acceptor is the Asp-14. Asp-14 and Gly-41 together coordinate Mg(2+). IMP contacts are provided by residues 14-17 (DEGK), 39-42 (NAGH), Thr-130, Arg-144, Gln-225, Thr-240, and Arg-304. The active-site Proton donor is the His-42. 300 to 306 (STTGRKR) contributes to the substrate binding site. GTP-binding positions include Arg-306, 332 to 334 (KLD), and 414 to 416 (STG).

It belongs to the adenylosuccinate synthetase family. Homodimer. The cofactor is Mg(2+).

The protein resides in the cytoplasm. The enzyme catalyses IMP + L-aspartate + GTP = N(6)-(1,2-dicarboxyethyl)-AMP + GDP + phosphate + 2 H(+). It functions in the pathway purine metabolism; AMP biosynthesis via de novo pathway; AMP from IMP: step 1/2. Its function is as follows. Plays an important role in the de novo pathway of purine nucleotide biosynthesis. Catalyzes the first committed step in the biosynthesis of AMP from IMP. The protein is Adenylosuccinate synthetase of Buchnera aphidicola subsp. Schizaphis graminum (strain Sg).